Here is a 262-residue protein sequence, read N- to C-terminus: Putative ABC transporter ATP-binding protein SAV_3608 (262 aa).

Residues 18–248 (LDVAGLAFAY…DTLMRAHRLE (231 aa)) enclose the ABC transporter domain. 51-58 (GPNGAGKT) serves as a coordination point for ATP.

It belongs to the ABC transporter superfamily.

It is found in the cell membrane. Functionally, probably part of an ABC transporter complex. Responsible for energy coupling to the transport system. The polypeptide is Putative ABC transporter ATP-binding protein SAV_3608 (Streptomyces avermitilis (strain ATCC 31267 / DSM 46492 / JCM 5070 / NBRC 14893 / NCIMB 12804 / NRRL 8165 / MA-4680)).